An 802-amino-acid polypeptide reads, in one-letter code: Potassium channel AKT2/3 (802 aa).

Residues 1 to 79 (MDLKYSASHC…PMDSRYRCWE (79 aa)) lie on the Cytoplasmic side of the membrane. Residues 80–100 (FYMVLLVAYSAWVYPFEVAFL) traverse the membrane as a helical segment. At 101-109 (NSSPKRNLC) the chain is on the extracellular side. Residues 110–130 (IADNIVDLFFAVDIVLTFFVA) traverse the membrane as a helical segment. The Cytoplasmic portion of the chain corresponds to 131-153 (YIDERTQLLVREPKQIAVRYLST). The chain crosses the membrane as a helical span at residues 154–174 (WFLMDVASTIPFDAIGYLITG). Over 175-183 (TSTLNITCN) the chain is Extracellular. A glycan (N-linked (GlcNAc...) asparagine) is linked at N179. A helical; Voltage-sensor transmembrane segment spans residues 184–204 (LLGLLRFWRLRRVKHLFTRLE). At 205–218 (KDIRYSYFWIRCFR) the chain is on the cytoplasmic side. Residues 219-239 (LLSVTLFLVHCAGCSYYLIAD) form a helical membrane-spanning segment. Residues 240–265 (RYPHQGKTWTDAIPNFTETSLSIRYI) lie on the Extracellular side of the membrane. An N-linked (GlcNAc...) asparagine glycan is attached at N254. Positions 266 to 285 (AAIYWSITTMTTVGYGDLHA) form an intramembrane region, pore-forming. Residues 286-288 (SNT) lie on the Extracellular side of the membrane. Residues 289-309 (IEMVFITVYMLFNLGLTAYLI) form a helical membrane-spanning segment. The Cytoplasmic segment spans residues 310 to 802 (GNMTNLVVEG…KLYFVVNKII (493 aa)). Residue 394 to 513 (LFKGVSREIL…ATMLKNFLQH (120 aa)) coordinates a nucleoside 3',5'-cyclic phosphate. ANK repeat units follow at residues 540–569 (NIAS…SPDI), 573–602 (KGKT…NIHI), 606–636 (NGNS…SDPH), 637–666 (IAGD…NVDT), and 670–699 (HGVT…DVVC). The 78-residue stretch at 725 to 802 (RVSIYRGHPL…KLYFVVNKII (78 aa)) folds into the KHA domain.

This sequence belongs to the potassium channel family. Plant (TC 1.A.1.4) subfamily. As to quaternary structure, the potassium channel is probably composed of a homo- or heterotetrameric complex of pore-forming subunits. Interacts with the phosphatase PPC2A and the kinase CIPK6. May interact with AKT1, KAT1 and KAT3. Interacts with SLAC1. Post-translationally, dephosphorylated by PP2CA. As to expression, expressed mainly in the phloem tissues throughout the plant but also, at a lower level, in leaf epiderm, mesophyll and guard cells.

The protein localises to the endoplasmic reticulum membrane. Its function is as follows. Highly selective and weak inward-rectifying potassium channel. Plays a role in both loading and unloading potassium into/from the phloem sap. Seems to control sugar loading into phloem via a voltage-dependent process. Blocked by physiological concentrations of external calcium and by external acidification. May interact with the cytoskeleton or with regulatory proteins. Dephosphorylation by PP2CA not only leads to the inhibition of potassium currents but also to an increase of the voltage-dependence of the channel. Regulated by the CBL4/CIPK6 calcium sensor/protein kinase complex via a kinase interaction-dependent but phosphorylation-independent translocation of the channel to the plasma membrane. The protein is Potassium channel AKT2/3 (AKT2) of Arabidopsis thaliana (Mouse-ear cress).